A 354-amino-acid chain; its full sequence is Cytoplasmic tRNA 2-thiolation protein 1 (354 aa).

This sequence belongs to the TtcA family. CTU1/NCS6/ATPBD3 subfamily.

It is found in the cytoplasm. It functions in the pathway tRNA modification; 5-methoxycarbonylmethyl-2-thiouridine-tRNA biosynthesis. Its function is as follows. Plays a central role in 2-thiolation of mcm(5)S(2)U at tRNA wobble positions of tRNA(Lys), tRNA(Glu) and tRNA(Gln). Directly binds tRNAs and probably acts by catalyzing adenylation of tRNAs, an intermediate required for 2-thiolation. It is unclear whether it acts as a sulfurtransferase that transfers sulfur from thiocarboxylated URM1 onto the uridine of tRNAs at wobble position. Prior mcm(5) tRNA modification by the elongator complex is required for 2-thiolation. May also be involved in protein urmylation. The chain is Cytoplasmic tRNA 2-thiolation protein 1 from Laccaria bicolor (strain S238N-H82 / ATCC MYA-4686) (Bicoloured deceiver).